Here is a 520-residue protein sequence, read N- to C-terminus: Cytochrome P450 monooxygenase 98 (520 aa).

A helical transmembrane segment spans residues 7–27 (MLNNNLLIVIGTFAVCVYIVL). Cysteine 445 lines the heme pocket.

Belongs to the cytochrome P450 family. It depends on heme as a cofactor.

The protein localises to the membrane. It functions in the pathway secondary metabolite biosynthesis. Functionally, cytochrome P450 monooxygenase that is able to use pyrene, phenanthrene, 3,5-dimethoxy-trans-stilbene and 3,5,4'-trimethoxy-trans-stilbene as substrates for oxidation. The chain is Cytochrome P450 monooxygenase 98 from Postia placenta (strain ATCC 44394 / Madison 698-R) (Brown rot fungus).